Reading from the N-terminus, the 375-residue chain is Chaperone protein DnaJ (375 aa).

The J domain maps to 5–70 (DYYEVLGVAR…NKRRAYDAHG (66 aa)). A CR-type zinc finger spans residues 131-208 (GIERRIEIPT…CHGAGRVEED (78 aa)). The Zn(2+) site is built by Cys-144, Cys-147, Cys-160, Cys-163, Cys-182, Cys-185, Cys-196, and Cys-199. CXXCXGXG motif repeat units lie at residues 144-151 (CAPCHGSG), 160-167 (CGTCHGRG), 182-189 (CPHCDGRG), and 196-203 (CKTCHGAG).

Belongs to the DnaJ family. Homodimer. Zn(2+) is required as a cofactor.

It is found in the cytoplasm. Functionally, participates actively in the response to hyperosmotic and heat shock by preventing the aggregation of stress-denatured proteins and by disaggregating proteins, also in an autonomous, DnaK-independent fashion. Unfolded proteins bind initially to DnaJ; upon interaction with the DnaJ-bound protein, DnaK hydrolyzes its bound ATP, resulting in the formation of a stable complex. GrpE releases ADP from DnaK; ATP binding to DnaK triggers the release of the substrate protein, thus completing the reaction cycle. Several rounds of ATP-dependent interactions between DnaJ, DnaK and GrpE are required for fully efficient folding. Also involved, together with DnaK and GrpE, in the DNA replication of plasmids through activation of initiation proteins. In Xanthomonas axonopodis pv. citri (strain 306), this protein is Chaperone protein DnaJ.